We begin with the raw amino-acid sequence, 202 residues long: Protein-methionine-sulfoxide reductase heme-binding subunit MsrQ (202 aa).

The next 5 helical transmembrane spans lie at 8 to 28, 82 to 102, 116 to 136, 149 to 169, and 171 to 191; these read IVWL…WLFW, LWCF…ELGI, PYLT…VTST, LLHN…LWSV, and IVSP…TWRY.

It belongs to the MsrQ family. In terms of assembly, heterodimer of a catalytic subunit (MsrP) and a heme-binding subunit (MsrQ). Requires FMN as cofactor. Heme b is required as a cofactor.

It localises to the cell inner membrane. Functionally, part of the MsrPQ system that repairs oxidized periplasmic proteins containing methionine sulfoxide residues (Met-O), using respiratory chain electrons. Thus protects these proteins from oxidative-stress damage caused by reactive species of oxygen and chlorine generated by the host defense mechanisms. MsrPQ is essential for the maintenance of envelope integrity under bleach stress, rescuing a wide series of structurally unrelated periplasmic proteins from methionine oxidation. MsrQ provides electrons for reduction to the reductase catalytic subunit MsrP, using the quinone pool of the respiratory chain. This Klebsiella pneumoniae subsp. pneumoniae (strain ATCC 700721 / MGH 78578) protein is Protein-methionine-sulfoxide reductase heme-binding subunit MsrQ.